A 1727-amino-acid polypeptide reads, in one-letter code: MSYNQSRPDRSETQYRRTGRSTGNQQQQQQHRSSSAAGYGKGAGAPGSAPAPSTYPDNSSLSSNRSFKKPGNAQGGGQPRVNLPPVNHPNNHNNGPNAHSRSQVTGEPGVGGPTNPTESFNRNTGPIPKAPTSQSTVMSSKINETPNTAKVAASGDASQAFPLQFGSLGPDLMVPARTTSAPPNMDDQKRAQMQQSSLRTASNVPASVPKKDSSNKGADNQLMRKEGHNPSSEKADIQVPHIAPPSQTQKSPITNIRMPSVQTPYQHTQVPHPVHFGGPNMHMQTPVTATSFQMPMPMALSMGNTPQIPPQVFYQGHPPHPMHHQGMMHQAQGHGFATPMGAQIHPQLGHVGVGLSPQYPQQQGGKYGGARKTTPVKITHPDTHEELRLDRRGDPYSEGDSTALKPHSNPPPRSQPVSSFAPRPVNLVQPSYNSNTMIYPPVSVPLNNGPMSSAQAPRYHYPVIDGSQRVQLINQPAHTAPQLIRPAAPAHLSSDSTSSVKARNAQNVMSSALPVNAKVSVKPAGVSEKLGSPKDRSHGEVNISLSQKNVEACSLSSSQQPKPSFVSGVPNSSAPPAKSPVETVPLAKSSVETVPPVKSSVETAPVTTTEIRRAEMVSESISVEDQTCKVEPPHNLTENRGQTMPDSLVSDPETATVAAKENLSLPATNGFRKQLLKVSTTSDAPTSDSVDTSIDKSTEGSSHASSEISGSSPQEKDLKCDNRTASDKLDERSVISDAKHETLSGVLEKAQNEVDGATDVCPVSEKLAVTDDTSSDLPHSTHVLSSTVPLGHSETHKSAVETNTRRNTSTKGKKKIKEILQKADAAGTTSDLYMAYKGPEEKKESSNVVHDVSNQNLLPAIPQAVEAIVDTEPVKNEPEDWEDAADVSTPKLETADNSVNAKRGSSDEVSDNCINTEKKYSRDFLLKFADLCTALPEGFDVSPDIANALIVAYMGASHHEHDSYPTPGKVMDRQASGARLDRRPSNVAGDDRWTKNQGSLPAGYGGNVGFRPGQGGNSGVLRNPRMQGPIISRPMQPVGPMGGMGRNTPDLERWQRGSNFQQKGLFPSPHTPMQVMHKAERKYQVGTIADEEQAKQRQLKSILNKLTPQNFEKLFEQVKSVNIDNAVTLSGVISQIFDKALMEPTFCEMYADFCFHLSGALPDFNENGEKITFKRLLLNKCQEEFERGEKEEEEASRVAEEGQVEQTEEEREEKRLQVRRRMLGNIRLIGELYKKRMLTEKIMHACIQKLLGYNQDPHEENIEALCKLMSTIGVMIDHNKAKFQMDGYFEKMKMLSCKQELSSRVRFMLINAIDLRKNKWQERMKVEGPKKIEEVHRDAAQERQTQANRLSRGPSMNSSGRRGHMEFSSPRGGGGMLSPPAAQMGSYHGPPQGRGFSNQDIRFDDRPSYEPRMVPMPQRSVCEEPITLGPQGGLGQGMSIRRPAVASNTYQSDATQAGGGDSRRPAGGLNGFGSHRPASPVTHGRSSPQERGTAYVHREFASLSRASDLSPEVSSARQVLQGPSATVNSPRENALSEEQLENLSLSAIKEYYSARDENEIGMCMKDMNSPAYHPTMISLWVTDSFERKDKERDLLAKLLVNLVKSADNALNEVQLVKGFESVLKTLEDAVNDAPKAAEFLGRIFGKSVTEKVVTLTEIGRLIQEGGEEPGSLIEFGLGGDVLGSVLEMIKTEAGEETLVEIRRSSGLRIENFKPHAPNRSKILEKFT.

Disordered stretches follow at residues 1-154 (MSYN…VAAS), 172-252 (LMVP…QKSP), 360-423 (PQQQ…FAPR), 552-581 (ACSLSSSQQPKPSFVSGVPNSSAPPAKSPV), 678-736 (VSTT…SVIS), and 784-815 (LSSTVPLGHSETHKSAVETNTRRNTSTKGKKK). Residues 25–38 (QQQQQQHRSSSAAG) are compositionally biased toward low complexity. The span at 55–65 (YPDNSSLSSNR) shows a compositional bias: polar residues. Low complexity predominate over residues 79–97 (PRVNLPPVNHPNNHNNGPN). 3 stretches are compositionally biased toward polar residues: residues 114–124 (TNPTESFNRNT), 131–148 (PTSQSTVMSSKINETPNT), and 191–205 (AQMQQSSLRTASNVP). 2 stretches are compositionally biased toward basic and acidic residues: residues 222–236 (LMRKEGHNPSSEKAD) and 379–395 (THPDTHEELRLDRRGDP). 2 stretches are compositionally biased toward polar residues: residues 552–562 (ACSLSSSQQPK) and 678–692 (VSTTSDAPTSDSVDT). Positions 699–712 (EGSSHASSEISGSS) are enriched in low complexity. Residues 714 to 736 (QEKDLKCDNRTASDKLDERSVIS) show a composition bias toward basic and acidic residues. Residues 800–810 (VETNTRRNTST) show a composition bias toward polar residues. Residues 916–928 (TEKKYSRDFLLKF) are EIF4E-binding. Disordered regions lie at residues 977 to 1007 (GARLDRRPSNVAGDDRWTKNQGSLPAGYGGN), 1188 to 1212 (GEKEEEEASRVAEEGQVEQTEEERE), 1336 to 1375 (HRDAAQERQTQANRLSRGPSMNSSGRRGHMEFSSPRGGGG), and 1446 to 1492 (ASNT…QERG). Basic and acidic residues-rich tracts occupy residues 979–994 (RLDRRPSNVAGDDRWT) and 1188–1200 (GEKEEEEASRVAE). A Phosphoserine modification is found at S985. The MIF4G domain occupies 1096–1319 (QRQLKSILNK…INAIDLRKNK (224 aa)). Acidic residues predominate over residues 1202–1211 (GQVEQTEEER). Composition is skewed to polar residues over residues 1342 to 1360 (ERQTQANRLSRGPSMNSSG) and 1446 to 1455 (ASNTYQSDAT). The residue at position 1529 (S1529) is a Phosphoserine. Residues 1539 to 1663 (QLENLSLSAI…TLTEIGRLIQ (125 aa)) enclose the MI domain.

The protein belongs to the eukaryotic initiation factor 4G family. As to quaternary structure, EIF4F is a multi-subunit complex, the composition of which varies with external and internal environmental conditions. It is composed of at least EIF4A, EIF4E and EIF4G. In higher plants two isoforms of EIF4F have been identified, named isoform EIF4F and isoform EIF(iso)4F. Isoform EIF4F has subunits p220 and p26, whereas isoform EIF(iso)4F has subunits p82 and p28.

Its function is as follows. Component of the protein complex eIF4F, which is involved in the recognition of the mRNA cap, ATP-dependent unwinding of 5'-terminal secondary structure and recruitment of mRNA to the ribosome. Plays a role in the accumulation of some potyvirus during viral infection. Required for the accumulation of cucumber mosaic virus 3a protein and turnip crinkle virus p28 replication protein during viral infection. These proteins are necessary for cell-to-cell movement of the virus. In Arabidopsis thaliana (Mouse-ear cress), this protein is Eukaryotic translation initiation factor 4G (EIF4G).